The following is a 788-amino-acid chain: Endonuclease MutS2 (788 aa).

Residue 332-339 participates in ATP binding; that stretch reads GPNTGGKT. Residues 713 to 788 form the Smr domain; sequence VDLRGMDAEE…GTGVTVVELK (76 aa).

It belongs to the DNA mismatch repair MutS family. MutS2 subfamily. As to quaternary structure, homodimer. Binds to stalled ribosomes, contacting rRNA.

In terms of biological role, endonuclease that is involved in the suppression of homologous recombination and thus may have a key role in the control of bacterial genetic diversity. Functionally, acts as a ribosome collision sensor, splitting the ribosome into its 2 subunits. Detects stalled/collided 70S ribosomes which it binds and splits by an ATP-hydrolysis driven conformational change. Acts upstream of the ribosome quality control system (RQC), a ribosome-associated complex that mediates the extraction of incompletely synthesized nascent chains from stalled ribosomes and their subsequent degradation. Probably generates substrates for RQC. In Clostridium botulinum (strain Langeland / NCTC 10281 / Type F), this protein is Endonuclease MutS2.